The chain runs to 520 residues: Probable glycerol-3-phosphate acyltransferase 3 (520 aa).

Transmembrane regions (helical) follow at residues 5–20 (ISIF…RFIL), 64–84 (YFML…LFIL), 88–108 (ISLM…FFGI), 264–284 (TLMN…AAAA), and 286–306 (LFVS…FSGC). An HXXXXD motif motif is present at residues 334–339 (HRTLLD).

It belongs to the GPAT/DAPAT family. As to expression, widely expressed at low level. Expressed at higher level in seedlings and leaves.

The protein localises to the membrane. The enzyme catalyses sn-glycerol 3-phosphate + an acyl-CoA = a 1-acyl-sn-glycero-3-phosphate + CoA. It participates in phospholipid metabolism; CDP-diacylglycerol biosynthesis; CDP-diacylglycerol from sn-glycerol 3-phosphate: step 1/3. Its function is as follows. Esterifies acyl-group from acyl-ACP to the sn-1 position of glycerol-3-phosphate, an essential step in glycerolipid biosynthesis. In Arabidopsis thaliana (Mouse-ear cress), this protein is Probable glycerol-3-phosphate acyltransferase 3 (GPAT3).